A 465-amino-acid chain; its full sequence is UDP-N-acetylmuramate--L-alanine ligase (465 aa).

ATP is bound at residue 125 to 131; that stretch reads GTHGKTT.

Belongs to the MurCDEF family.

It localises to the cytoplasm. The enzyme catalyses UDP-N-acetyl-alpha-D-muramate + L-alanine + ATP = UDP-N-acetyl-alpha-D-muramoyl-L-alanine + ADP + phosphate + H(+). It participates in cell wall biogenesis; peptidoglycan biosynthesis. Functionally, cell wall formation. In Deinococcus geothermalis (strain DSM 11300 / CIP 105573 / AG-3a), this protein is UDP-N-acetylmuramate--L-alanine ligase.